A 516-amino-acid polypeptide reads, in one-letter code: Calcitonin receptor (516 aa).

Positions 1-24 (MRFLLLNRFTLLLLLLVSPTPVLQ) are cleaved as a signal peptide. Topologically, residues 25–146 (APTNLTDSGL…FTPDKLHNAY (122 aa)) are extracellular. N-linked (GlcNAc...) asparagine glycosylation is found at Asn-28, Asn-73, Asn-125, and Asn-130. 3 disulfide bridges follow: Cys-55–Cys-81, Cys-72–Cys-112, and Cys-95–Cys-134. The chain crosses the membrane as a helical span at residues 147-169 (VLYYLALVGHSMSIAALIASMGI). Residues 170 to 181 (FLFFKNLSCQRV) are Cytoplasmic-facing. A helical transmembrane segment spans residues 182-202 (TLHKNMFLTYILNSIIIIIHL). Residues 203–256 (VEVVPNGDLVRRDPMHIFHHNTYMWTMQWELSPPLPLSAHEGKMDPHDSEVISC) are Extracellular-facing. Cys-256 and Cys-326 form a disulfide bridge. Residues 257-279 (KILHFFHQYMMACNYFWMLCEGI) form a helical membrane-spanning segment. Residues 280–296 (YLHTLIVMAVFTEDQRL) are Cytoplasmic-facing. The chain crosses the membrane as a helical span at residues 297-317 (RWYYLLGWGFPIVPTIIHAIT). Topologically, residues 318 to 333 (RAVYYNDNCWLSTETH) are extracellular. A helical membrane pass occupies residues 334–357 (LLYIIHGPVMAALVVNFFFLLNIV). The Cytoplasmic portion of the chain corresponds to 358–377 (RVLVTKMRQTHEAEAYMYLK). The chain crosses the membrane as a helical span at residues 378-396 (AVKATMVLVPLLGIQFVVF). Residues 397 to 404 (PWRPSNKV) are Extracellular-facing. The helical transmembrane segment at 405 to 431 (LGKIYDYLMHSLIHFQGFFVATIYCFC) threads the bilayer. Residues 432-516 (NHEVQVTLKR…MNVIQQDSSA (85 aa)) are Cytoplasmic-facing. Positions 489–516 (RNPPVSNNEGEEGTEMIPMNVIQQDSSA) are disordered.

Belongs to the G-protein coupled receptor 2 family. Heterodimer of CALCR and RAMP1, RAMP2 or RAMP3; the receptor complexes function as AMYR1, AMYR2 and AMYR3 receptors, respectively, and respond to amylin/IAPP, calcitonin/CT and CGRP1 ligands. Interacts with GPRASP2.

The protein resides in the cell membrane. Its function is as follows. G protein-coupled receptor activated by ligand peptides amylin (IAPP), calcitonin (CT/CALCA) and calcitonin gene-related peptide type 1 (CGRP1/CALCA). CALCR interacts with receptor-activity-modifying proteins RAMP1, 2 and 3 to form receptor complexes AMYR1, 2 and 3, respectively. IAPP, CT and CGRP1 activate CALCR and AMYRs with distinct modes of receptor activation resulting in specific phenotypes. Ligand binding causes a conformation change that triggers signaling via guanine nucleotide-binding proteins (G proteins) and modulates the activity of downstream effectors. Activates cAMP-dependent pathway. This Rattus norvegicus (Rat) protein is Calcitonin receptor.